Consider the following 214-residue polypeptide: HFQNYSSTKEGSLYSISLWGNRIPKGVNKDFVLSTTKSEVSFFSQNISISKGQGNTRNRTGSFSTSFGSKNLFTYPHETGNTMLFPLLILLLFTFFIGFIGIPFDNRTMDNGIVRLTILSKWLIPSINFTQESSNFSINSYEFITNAISSVSLAILGLFIAYIFYGSAYSFFQNLDLQNSFYKGSPKKNFFYQVKKKIYSWSYNRGYIDIFYSR.

Helical transmembrane passes span 84–104 (LFPL…GIPF) and 152–172 (SLAI…YSFF).

The protein belongs to the complex I subunit 5 family. In terms of assembly, NDH is composed of at least 16 different subunits, 5 of which are encoded in the nucleus.

The protein resides in the plastid. Its subcellular location is the chloroplast thylakoid membrane. It carries out the reaction a plastoquinone + NADH + (n+1) H(+)(in) = a plastoquinol + NAD(+) + n H(+)(out). The enzyme catalyses a plastoquinone + NADPH + (n+1) H(+)(in) = a plastoquinol + NADP(+) + n H(+)(out). Its function is as follows. NDH shuttles electrons from NAD(P)H:plastoquinone, via FMN and iron-sulfur (Fe-S) centers, to quinones in the photosynthetic chain and possibly in a chloroplast respiratory chain. The immediate electron acceptor for the enzyme in this species is believed to be plastoquinone. Couples the redox reaction to proton translocation, and thus conserves the redox energy in a proton gradient. This is NAD(P)H-quinone oxidoreductase subunit 5, chloroplastic (ndhF) from Brachypodium sylvaticum (False brome).